A 930-amino-acid polypeptide reads, in one-letter code: Translation initiation factor IF-2 (930 aa).

Residues Phe31–Glu317 form a disordered region. Positions Pro61 to Ala78 are enriched in low complexity. Composition is skewed to pro residues over residues Arg79–Ala99 and Pro108–Pro120. Residues Ala121–Ala135 show a composition bias toward low complexity. 2 stretches are compositionally biased toward pro residues: residues Arg136–Arg158 and Pro178–Gly192. Over residues Pro193–Arg205 the composition is skewed to gly residues. The span at Asn212–Thr242 shows a compositional bias: pro residues. The segment covering Gly244–Gly301 has biased composition (gly residues). A compositionally biased stretch (basic residues) spans Lys305 to Lys314. The 173-residue stretch at Phe426–Asp598 folds into the tr-type G domain. The interval Gly435–Thr442 is G1. Gly435–Thr442 contacts GTP. Positions Gly460–His464 are G2. Residues Asp485–Gly488 form a G3 region. GTP is bound by residues Asp485–His489 and Asn539–Asp542. The interval Asn539–Asp542 is G4. The segment at Ser575 to Lys577 is G5.

It belongs to the TRAFAC class translation factor GTPase superfamily. Classic translation factor GTPase family. IF-2 subfamily.

The protein resides in the cytoplasm. One of the essential components for the initiation of protein synthesis. Protects formylmethionyl-tRNA from spontaneous hydrolysis and promotes its binding to the 30S ribosomal subunits. Also involved in the hydrolysis of GTP during the formation of the 70S ribosomal complex. The protein is Translation initiation factor IF-2 of Mycolicibacterium gilvum (strain PYR-GCK) (Mycobacterium gilvum (strain PYR-GCK)).